The following is a 299-amino-acid chain: Bifunctional protein FolD (299 aa).

NADP(+) contacts are provided by residues 166 to 168, Ser191, and Ile232; that span reads GRS.

It belongs to the tetrahydrofolate dehydrogenase/cyclohydrolase family. As to quaternary structure, homodimer.

It catalyses the reaction (6R)-5,10-methylene-5,6,7,8-tetrahydrofolate + NADP(+) = (6R)-5,10-methenyltetrahydrofolate + NADPH. The catalysed reaction is (6R)-5,10-methenyltetrahydrofolate + H2O = (6R)-10-formyltetrahydrofolate + H(+). The protein operates within one-carbon metabolism; tetrahydrofolate interconversion. Functionally, catalyzes the oxidation of 5,10-methylenetetrahydrofolate to 5,10-methenyltetrahydrofolate and then the hydrolysis of 5,10-methenyltetrahydrofolate to 10-formyltetrahydrofolate. The chain is Bifunctional protein FolD from Anaplasma marginale (strain St. Maries).